Here is an 871-residue protein sequence, read N- to C-terminus: Mitochondrial 15S rRNA processing factor CCM1 (871 aa).

The N-terminal 72 residues, 1 to 72, are a transit peptide targeting the mitochondrion; sequence MLGRRLAGAK…EFKLRQLREF (72 aa). PPR repeat units lie at residues 333-369 and 370-404; these read NKENYTVIAQFYTKLGLHDKAWDIFATMKFLSADHKP and DAKTYTCMLSLCNKEKNYAKAIDLFNEMIDLKVDP. A disordered region spans residues 704–724; that stretch reads RPGSSTHLTHSEIKKQPSSQT.

It belongs to the CCM1 family. In terms of assembly, binds to mitochondrial small subunit 15S rRNA.

Its subcellular location is the mitochondrion. Regulates mitochondrial small subunit maturation by controlling 15S rRNA 5'-end processing. Localizes to the 5' precursor of the 15S rRNA in a position that is subsequently occupied by mS47 in the mature yeast mtSSU. Uses structure and sequence-specific RNA recognition, binding to a single-stranded region of the precursor and specifically recognizing bases -6 to -1. The exchange of Ccm1 for mS47 is coupled to the irreversible removal of precursor rRNA that is accompanied by conformational changes of the mitoribosomal proteins uS5m and mS26. These conformational changes signal completion of 5'-end rRNA processing through protection of the mature 5'-end of the 15S rRNA and stabilization of mS47. The removal of the 5' precursor together with the dissociation of Ccm1 may be catalyzed by the 5'-3' exoribonuclease Pet127. Involved in the specific removal of group I introns in mitochondrial encoded transcripts. This chain is Mitochondrial 15S rRNA processing factor CCM1 (CCM1), found in Lachancea thermotolerans (strain ATCC 56472 / CBS 6340 / NRRL Y-8284) (Yeast).